The sequence spans 365 residues: 3-isopropylmalate dehydrogenase (365 aa).

80–93 (GPKWADNTGDQRPE) is an NAD(+) binding site. Residues Arg100, Arg110, Arg138, and Asp223 each coordinate substrate. Residues Asp223, Asp247, and Asp251 each contribute to the Mg(2+) site. Residue 280–292 (GSAPDIAGQDVAN) participates in NAD(+) binding. Residues 337 to 365 (NEEDASTSAFGREVATRAADSVPQNAPTP) are disordered.

The protein belongs to the isocitrate and isopropylmalate dehydrogenases family. LeuB type 1 subfamily. As to quaternary structure, homodimer. It depends on Mg(2+) as a cofactor. Mn(2+) is required as a cofactor.

It is found in the cytoplasm. It catalyses the reaction (2R,3S)-3-isopropylmalate + NAD(+) = 4-methyl-2-oxopentanoate + CO2 + NADH. Its pathway is amino-acid biosynthesis; L-leucine biosynthesis; L-leucine from 3-methyl-2-oxobutanoate: step 3/4. Catalyzes the oxidation of 3-carboxy-2-hydroxy-4-methylpentanoate (3-isopropylmalate) to 3-carboxy-4-methyl-2-oxopentanoate. The product decarboxylates to 4-methyl-2 oxopentanoate. This is 3-isopropylmalate dehydrogenase from Salinibacter ruber (strain DSM 13855 / M31).